The sequence spans 323 residues: Methionyl-tRNA formyltransferase (323 aa).

Residue 113-116 participates in (6S)-5,6,7,8-tetrahydrofolate binding; it reads SLLP.

Belongs to the Fmt family.

It carries out the reaction L-methionyl-tRNA(fMet) + (6R)-10-formyltetrahydrofolate = N-formyl-L-methionyl-tRNA(fMet) + (6S)-5,6,7,8-tetrahydrofolate + H(+). Functionally, attaches a formyl group to the free amino group of methionyl-tRNA(fMet). The formyl group appears to play a dual role in the initiator identity of N-formylmethionyl-tRNA by promoting its recognition by IF2 and preventing the misappropriation of this tRNA by the elongation apparatus. This is Methionyl-tRNA formyltransferase from Porphyromonas gingivalis (strain ATCC BAA-308 / W83).